An 830-amino-acid polypeptide reads, in one-letter code: Formin-like protein 14 (830 aa).

A signal peptide spans 1 to 34 (MAMAMAMPSSSPPLFFSLLNLMLLLLLLAPYCSA). Positions 40-59 (NNTHHRSSSPTQTTLQQLHS) are enriched in polar residues. The segment at 40–195 (NNTHHRSSSP…NISTLVHPTQ (156 aa)) is disordered. 2 stretches are compositionally biased toward pro residues: residues 61–86 (DSPP…PAPR) and 95–135 (PPPP…PTPK). The segment covering 149–160 (YPFTNYPFFPNF) has biased composition (low complexity). A helical membrane pass occupies residues 203–223 (VLQALLLSFLSLCLLLLSALL). The disordered stretch occupies residues 235-446 (HHSHSHPNAR…LHSDKLKPGS (212 aa)). A compositionally biased stretch (pro residues) spans 314–323 (RPLPPLPRVG). Over residues 324-369 (PPSGEFASRSSASDPSTAPPAAAEASSSSLSPSSPSASSPTLGSSP) the composition is skewed to low complexity. Positions 390 to 823 (PKRRPQPPEP…MMGRDWNMAA (434 aa)) constitute an FH2 domain. Residues 424–446 (HSPSEKSMRKSRPLHSDKLKPGS) show a composition bias toward basic and acidic residues.

Belongs to the formin-like family. Class-I subfamily.

The protein resides in the membrane. The protein is Formin-like protein 14 (FH14) of Oryza sativa subsp. japonica (Rice).